Reading from the N-terminus, the 155-residue chain is Cytochrome c-type biogenesis protein CcmE (155 aa).

The Cytoplasmic segment spans residues 1 to 8; that stretch reads MNPLRKKR. The helical; Signal-anchor for type II membrane protein transmembrane segment at 9–29 threads the bilayer; the sequence is LLIIVALLAGVGLAVTLALSA. The Periplasmic portion of the chain corresponds to 30–155; sequence LQENINLFYT…AASPTPVKQG (126 aa). Residues histidine 124 and tyrosine 128 each coordinate heme.

Belongs to the CcmE/CycJ family.

It localises to the cell inner membrane. Heme chaperone required for the biogenesis of c-type cytochromes. Transiently binds heme delivered by CcmC and transfers the heme to apo-cytochromes in a process facilitated by CcmF and CcmH. The chain is Cytochrome c-type biogenesis protein CcmE from Pseudomonas syringae pv. syringae (strain B728a).